Here is a 55-residue protein sequence, read N- to C-terminus: Large ribosomal subunit protein uL15 (55 aa).

Belongs to the universal ribosomal protein uL15 family. In terms of assembly, part of the 50S ribosomal subunit.

Binds to the 23S rRNA. The sequence is that of Large ribosomal subunit protein uL15 (rplO) from Lactococcus lactis subsp. cremoris (Streptococcus cremoris).